A 510-amino-acid polypeptide reads, in one-letter code: Tryptophan 6-hydroxylase fscE (510 aa).

The chain crosses the membrane as a helical span at residues 11 to 31 (LLPIEGVIILVFVLSCFSLAI). Cysteine 452 serves as a coordination point for heme.

This sequence belongs to the cytochrome P450 family. Heme serves as cofactor.

The protein resides in the membrane. Its pathway is secondary metabolite biosynthesis. Functionally, tryptophan 6-hydroxylase; part of the fragmented gene cluster that mediates the biosynthesis of fusarochromene, a tryptophan-derived metabolite closely related to a group of mycotoxins including fusarochromanone. Within the pathway, fscE hydroxalates the first intermediate D-tryptophan to yield 6-hydroxytryptophan. The first step of the pathway is the epimerization of L-tryptophan to D-tryptophan in the presence of the NRPS-like tryptophan epimerase fscC. D-tryptophan is subsequently hydroxylated by the tryptophan 6-hydroxylase fscE to yield 6-hydroxytryptophan. The pyrrole ring undergoes cleavaged by the tryptophan 2,3-dioxygenase fscD and is finally converted to 4-hydroxykyrunenine by the hydrolase fscH. The NRPS-like oxidoreductase fscA reduces the carboxyl group to primary alcohol and the DMATS-type prenyltransferase fscG performs prenylation, followed by the formation of a chromene ring catalyzed by the oxidoreductase fscI, which leads to desacetylfusarochromene. Epoxidation by fscF and rearrangement reactions of chromene double bonds convert compound desacetylfusarochromene to fusarochromanones. Although specific acetyltransferases were not found near the fsc gene cluster, several predicted enzymes containing the N-acetyltransferase superfamily domain are present in the genome of F.equiseti. These predicted enzymes may have the potential to convert desacetylfusarochromene to fusarochromene. The sequence is that of Tryptophan 6-hydroxylase fscE from Fusarium equiseti (Fusarium scirpi).